We begin with the raw amino-acid sequence, 778 residues long: Aerobic respiration control sensor protein ArcB (778 aa).

The Cytoplasmic segment spans residues 1-25; that stretch reads MKQIRLLAQYYVDLMMKLGLVRFSM. A helical transmembrane segment spans residues 26 to 46; that stretch reads LLALALVVLAIVVQMAVTMVL. The Periplasmic segment spans residues 47–57; the sequence is HGQVESIDVIR. The helical transmembrane segment at 58–78 threads the bilayer; sequence SIFFGLLITPWAVYFLSVVVE. The Cytoplasmic segment spans residues 79–778; the sequence is QLEESRQRLS…KAWVAKATKK (700 aa). The region spanning 153 to 223 is the PAS domain; it reads QSSFLRSFLD…ETDEKVFRHN (71 aa). Residues 226–278 enclose the PAC domain; it reads LTYEQWLDYPDGRKACFEIRKVPYYDRVGKRHGLMGFGRDITERKRYQDALER. Residues 289–507 form the Histidine kinase domain; the sequence is TISHELRTPL…TFTLTIHAPS (219 aa). Residue H292 is modified to Phosphohistidine; by autocatalysis. Residues 527–643 form the Response regulatory domain; the sequence is NVLLVEDIEL…ALTAMIKKFW (117 aa). Residue D576 is modified to 4-aspartylphosphate. The 94-residue stretch at 678–771 folds into the HPt domain; that stretch reads GPKLITDGLA…RHDVEVLKAW (94 aa). At H717 the chain carries Phosphohistidine.

Activation requires a sequential transfer of a phosphate group from a His in the primary transmitter domain, to an Asp in the receiver domain and to a His in the secondary transmitter domain.

The protein localises to the cell inner membrane. The enzyme catalyses ATP + protein L-histidine = ADP + protein N-phospho-L-histidine.. Functionally, member of the two-component regulatory system ArcB/ArcA. Sensor-regulator protein for anaerobic repression of the arc modulon. Activates ArcA via a four-step phosphorelay. ArcB can also dephosphorylate ArcA by a reverse phosphorelay involving His-717 and Asp-576. This Escherichia coli O157:H7 protein is Aerobic respiration control sensor protein ArcB (arcB).